The following is a 549-amino-acid chain: Serine/threonine-protein phosphatase PPQ (549 aa).

A compositionally biased stretch (polar residues) spans 1 to 13 (MRRSPSRSNNNFA). 4 disordered regions span residues 1–50 (MRRS…RSLP), 64–85 (YNTL…DNLL), 133–158 (TSST…NYSS), and 189–219 (SRVK…PKSS). 2 stretches are compositionally biased toward low complexity: residues 16 to 32 (NCST…TTPS) and 68 to 83 (ASAG…SNDN). Over residues 205–217 (APSSPTSGIPNPK) the composition is skewed to polar residues. Mn(2+)-binding residues include Asp-301, His-303, Asp-329, and Asn-361. The Proton donor role is filled by His-362. The Mn(2+) site is built by His-410 and His-485.

Belongs to the PPP phosphatase family. PP-Z subfamily. Mn(2+) is required as a cofactor.

The catalysed reaction is O-phospho-L-seryl-[protein] + H2O = L-seryl-[protein] + phosphate. It catalyses the reaction O-phospho-L-threonyl-[protein] + H2O = L-threonyl-[protein] + phosphate. Functionally, phosphatase involved in the regulation of protein synthesis. Affects translational accuracy. This chain is Serine/threonine-protein phosphatase PPQ (PPQ1), found in Saccharomyces cerevisiae (strain ATCC 204508 / S288c) (Baker's yeast).